The chain runs to 251 residues: uncharacterized protein (251 aa).

One can recognise an HTH deoR-type domain in the interval 3 to 58 (TPERHQLIIDQIEKHDVVKIQELINLTNASESTIRRDLSTLEERGFLKRVHGGAAK). The segment at residues 20-39 (VKIQELINLTNASESTIRRD) is a DNA-binding region (H-T-H motif).

This is an uncharacterized protein from Bacillus subtilis (strain 168).